Consider the following 359-residue polypeptide: Guanine nucleotide-binding protein subunit alpha-11 (359 aa).

Residues Cys-9 and Cys-10 are each lipidated (S-palmitoyl cysteine). The 322-residue stretch at 38 to 359 (RELKLLLLGT…QLNLKEYNLV (322 aa)) folds into the G-alpha domain. The G1 motif stretch occupies residues 41–54 (KLLLLGTGESGKST). GTP contacts are provided by residues 46–53 (GTGESGKS) and 180–183 (LRVR). Ser-53 is a binding site for Mg(2+). The tract at residues 178-186 (DVLRVRVPT) is G2 motif. Residue Thr-186 coordinates Mg(2+). The interval 201 to 210 (FRMVDVGGQR) is G3 motif. The tract at residues 270–277 (ILFLNKKD) is G4 motif. GTP is bound by residues 274–277 (NKKD) and Ala-331. The G5 motif stretch occupies residues 329-334 (TCATDT).

The protein belongs to the G-alpha family. G(q) subfamily. G proteins are composed of 3 units; alpha, beta and gamma. The alpha chain contains the guanine nucleotide binding site. Interacts with RGS22. Interacts with NTSR1.

The protein localises to the cell membrane. It is found in the cytoplasm. The enzyme catalyses GTP + H2O = GDP + phosphate + H(+). Its function is as follows. Guanine nucleotide-binding proteins (G proteins) function as transducers downstream of G protein-coupled receptors (GPCRs) in numerous signaling cascades. The alpha chain contains the guanine nucleotide binding site and alternates between an active, GTP-bound state and an inactive, GDP-bound state. Signaling by an activated GPCR promotes GDP release and GTP binding. The alpha subunit has a low GTPase activity that converts bound GTP to GDP, thereby terminating the signal. Both GDP release and GTP hydrolysis are modulated by numerous regulatory proteins. Signaling is mediated via phospholipase C-beta-dependent inositol lipid hydrolysis for signal propagation: activates phospholipase C-beta: following GPCR activation, GNA11 activates PLC-beta (PLCB1, PLCB2, PLCB3 or PLCB4), leading to production of diacylglycerol (DAG) and inositol 1,4,5-trisphosphate (IP3). Transduces FFAR4 signaling in response to long-chain fatty acids (LCFAs). Together with GNAQ, required for heart development. In the respiratory epithelium, transmits OXGR1-dependent signals that lead to downstream intracellular Ca(2+) release and mucocilliary clearance of airborne pathogens. This Mus musculus (Mouse) protein is Guanine nucleotide-binding protein subunit alpha-11 (Gna11).